Here is a 354-residue protein sequence, read N- to C-terminus: Selenide, water dikinase (354 aa).

Cysteine 23 is an active-site residue. ATP contacts are provided by residues lysine 26 and 54–56 (TSD). Aspartate 57 serves as a coordination point for Mg(2+). ATP-binding positions include aspartate 74, aspartate 97, and 145-147 (GHS). Mg(2+) is bound at residue aspartate 97. Aspartate 233 is a binding site for Mg(2+).

This sequence belongs to the selenophosphate synthase 1 family. Class I subfamily. As to quaternary structure, homodimer. Requires Mg(2+) as cofactor.

The catalysed reaction is hydrogenselenide + ATP + H2O = selenophosphate + AMP + phosphate + 2 H(+). Its function is as follows. Synthesizes selenophosphate from selenide and ATP. This is Selenide, water dikinase from Burkholderia orbicola (strain MC0-3).